The following is a 236-amino-acid chain: uncharacterized protein (236 aa).

Residues 3 to 208 form the DPCK domain; that stretch reads ILGLTGSIAT…PSYFFTLLCL (206 aa). 8-15 contributes to the ATP binding site; sequence GSIATGKS. Phosphoserine is present on residues S82 and S86.

It belongs to the CoaE family.

It is found in the cytoplasm. This is an uncharacterized protein from Schizosaccharomyces pombe (strain 972 / ATCC 24843) (Fission yeast).